A 406-amino-acid polypeptide reads, in one-letter code: 2,3-bisphosphoglycerate-independent phosphoglycerate mutase (406 aa).

A compositionally biased stretch (basic and acidic residues) spans 156–165 (ITEGDPHKEG). Positions 156-177 (ITEGDPHKEGVPIPEVKPLDNS) are disordered.

Belongs to the BPG-independent phosphoglycerate mutase family. A-PGAM subfamily.

The catalysed reaction is (2R)-2-phosphoglycerate = (2R)-3-phosphoglycerate. Its pathway is carbohydrate degradation; glycolysis; pyruvate from D-glyceraldehyde 3-phosphate: step 3/5. Its function is as follows. Catalyzes the interconversion of 2-phosphoglycerate and 3-phosphoglycerate. The protein is 2,3-bisphosphoglycerate-independent phosphoglycerate mutase of Methanococcus aeolicus (strain ATCC BAA-1280 / DSM 17508 / OCM 812 / Nankai-3).